We begin with the raw amino-acid sequence, 55 residues long: Cop-6 protein (55 aa).

It belongs to the transcriptional regulatory CopG/NikR family.

Functionally, acts in trans as a negative regulatory element in pE194 replication. The sequence is that of Cop-6 protein from Staphylococcus aureus.